We begin with the raw amino-acid sequence, 2061 residues long: Myoferlin (2061 aa).

The C2 1 domain occupies 1–101 (MLRVIVESAS…TGDQSRSLPY (101 aa)). Topologically, residues 1–2025 (MLRVIVESAS…MKFIVWRRFK (2025 aa)) are cytoplasmic. The disordered stretch occupies residues 123-172 (GYDPPSAPHPNDLSGPSVPGMGGDGEEDEGDEDRLDNAVRGPGPKGPVGT). Positions 146–156 (DGEEDEGDEDR) are enriched in acidic residues. Serine 174 is modified (phosphoserine). C2 domains lie at 181-300 (RLTK…RKWL) and 339-474 (DSDD…VEDF). The segment at 186 to 281 (KNSRRMLSNK…RADCLMGEFK (96 aa)) is necessary for interaction with EHD2. The segment at 323-342 (LGTGDEPPPERRDRDNDSDD) is disordered. The Ca(2+) site is built by aspartate 390, aspartate 396, aspartate 444, aspartate 446, and aspartate 452. N6-acetyllysine is present on lysine 553. The residue at position 729 (serine 729) is a Phosphoserine. At lysine 884 the chain carries N6-acetyllysine. A disordered region spans residues 938 to 967 (ESRYPGGDWKPAEDTYTDANGDKAASPSEL). 2 consecutive C2 domains span residues 1123-1251 (GANT…LLWH) and 1282-1410 (LPPQ…GKED). Residues aspartate 1155, aspartate 1161, aspartate 1217, and aspartate 1219 each contribute to the Ca(2+) site. Lysine 1507 is subject to N6-acetyllysine. 2 consecutive C2 domains span residues 1536 to 1654 (PAPP…SHCG) and 1772 to 1920 (GPPG…EKCR). Ca(2+)-binding residues include aspartate 1569, aspartate 1575, aspartate 1624, aspartate 1626, aspartate 1891, serine 1894, and aspartate 1897. Serine 1915 carries the phosphoserine modification. The helical transmembrane segment at 2026-2046 (WVIIGLLFLLILLLFVAVLLY) threads the bilayer. The Extracellular segment spans residues 2047 to 2061 (SLPNYLSMKIVKPNV).

The protein belongs to the ferlin family. In terms of assembly, interacts with DNM2 and KDR. Interacts with EHD1. Interacts with EHD2; the interaction is direct. Interacts with RIPOR2. Ca(2+) serves as cofactor. In terms of tissue distribution, expressed in myoblast and endothelial cells (at protein level). Highly expressed in cardiac and skeletal muscles. Also present in lung, and at very low levels in kidney, placenta and brain.

The protein resides in the cell membrane. The protein localises to the nucleus membrane. Its subcellular location is the cytoplasmic vesicle membrane. Its function is as follows. Calcium/phospholipid-binding protein that plays a role in the plasmalemma repair mechanism of endothelial cells that permits rapid resealing of membranes disrupted by mechanical stress. Involved in endocytic recycling. Implicated in VEGF signal transduction by regulating the levels of the receptor KDR. This Homo sapiens (Human) protein is Myoferlin (MYOF).